A 160-amino-acid polypeptide reads, in one-letter code: Ureidoglycolate lyase (160 aa).

This sequence belongs to the ureidoglycolate lyase family. In terms of assembly, homodimer. It depends on Ni(2+) as a cofactor.

The enzyme catalyses (S)-ureidoglycolate = urea + glyoxylate. It functions in the pathway nitrogen metabolism; (S)-allantoin degradation. Its function is as follows. Catalyzes the catabolism of the allantoin degradation intermediate (S)-ureidoglycolate, generating urea and glyoxylate. Involved in the utilization of allantoin as nitrogen source. The chain is Ureidoglycolate lyase from Salmonella typhimurium (strain LT2 / SGSC1412 / ATCC 700720).